The primary structure comprises 223 residues: Phosphoribosylformylglycinamidine synthase subunit PurQ (223 aa).

Positions 2 to 223 (KFAVIQFPGS…ASVLKNFVGK (222 aa)) constitute a Glutamine amidotransferase type-1 domain. Residue C86 is the Nucleophile of the active site. Active-site residues include H195 and E197.

In terms of assembly, part of the FGAM synthase complex composed of 1 PurL, 1 PurQ and 2 PurS subunits.

It is found in the cytoplasm. It catalyses the reaction N(2)-formyl-N(1)-(5-phospho-beta-D-ribosyl)glycinamide + L-glutamine + ATP + H2O = 2-formamido-N(1)-(5-O-phospho-beta-D-ribosyl)acetamidine + L-glutamate + ADP + phosphate + H(+). The catalysed reaction is L-glutamine + H2O = L-glutamate + NH4(+). It participates in purine metabolism; IMP biosynthesis via de novo pathway; 5-amino-1-(5-phospho-D-ribosyl)imidazole from N(2)-formyl-N(1)-(5-phospho-D-ribosyl)glycinamide: step 1/2. Functionally, part of the phosphoribosylformylglycinamidine synthase complex involved in the purines biosynthetic pathway. Catalyzes the ATP-dependent conversion of formylglycinamide ribonucleotide (FGAR) and glutamine to yield formylglycinamidine ribonucleotide (FGAM) and glutamate. The FGAM synthase complex is composed of three subunits. PurQ produces an ammonia molecule by converting glutamine to glutamate. PurL transfers the ammonia molecule to FGAR to form FGAM in an ATP-dependent manner. PurS interacts with PurQ and PurL and is thought to assist in the transfer of the ammonia molecule from PurQ to PurL. The sequence is that of Phosphoribosylformylglycinamidine synthase subunit PurQ from Lactococcus lactis subsp. lactis (strain IL1403) (Streptococcus lactis).